We begin with the raw amino-acid sequence, 387 residues long: F-box protein DOR (387 aa).

The F-box domain occupies 19-64 (DENFEPIPIDLVIEIFSRSPVKSIARCRCVSKLWASILRLPYFTEL).

As to quaternary structure, part of a SCF (ASK-cullin-F-box) protein ligase complex. Interacts with ASK14 and CUL1. As to expression, strongly expressed in guard cells. Mostly represented in seedlings, leaves and flowers, and, to a lower extent, in roots and siliques.

Its pathway is protein modification; protein ubiquitination. Its function is as follows. Component of SCF(ASK-cullin-F-box) E3 ubiquitin ligase complexes, which may mediate the ubiquitination and subsequent proteasomal degradation of target proteins. Negative regulator of guard cell abscisic acid (ABA) signaling, especially during drought stress. This Arabidopsis thaliana (Mouse-ear cress) protein is F-box protein DOR (DOR).